The chain runs to 344 residues: Ion-translocating oxidoreductase complex subunit D (344 aa).

Transmembrane regions (helical) follow at residues 23-43, 44-64, 77-99, and 120-140; these read LVLG…GPGT, LLNL…MLAL, SALV…WLTL, and PFNP…LEMT. Thr-172 carries the FMN phosphoryl threonine modification. Helical transmembrane passes span 198–218, 222–242, 252–272, 285–305, and 306–326; these read LGSA…LFLL, LFTW…SLLF, GSPL…FIVT, LVFG…GGYP, and DGMA…DYYT.

This sequence belongs to the NqrB/RnfD family. In terms of assembly, the complex is composed of six subunits: RnfA, RnfB, RnfC, RnfD, RnfE and RnfG. The cofactor is FMN.

The protein resides in the cell inner membrane. Part of a membrane-bound complex that couples electron transfer with translocation of ions across the membrane. This Pseudomonas aeruginosa (strain LESB58) protein is Ion-translocating oxidoreductase complex subunit D.